A 330-amino-acid polypeptide reads, in one-letter code: MKKQFIQKQQQISLVKSFFSRQLEQQLGLIEVQAPILSRLGDGTQDNLSGSEKAVQVKVKTLPDATFEVVHSLAKWKRKTLGSYDFGAGEGLYTHMKALRPDEDRLSAIHSVYVDQWDWERVMGDGERSQDYLESTVRSIYAAIKATEGEVSREYGLTPFLPEQIHFVHSETLLQRYPELDAKGRERAIAKELGAVFLIGIGGKLSHGKSHDVRAPDYDDWTTPAAEGLAGLNGDILVWNPVLQDAFELSSMGIRVDASALKRQLAQTGDEDRLALEWHQSLLRGEMPQTIGGGIGQSRLVMLLLQLSHIGQVQCGVWSPQVREAVEGLL.

The protein belongs to the class-II aminoacyl-tRNA synthetase family. AsnA subfamily.

Its subcellular location is the cytoplasm. It carries out the reaction L-aspartate + NH4(+) + ATP = L-asparagine + AMP + diphosphate + H(+). It functions in the pathway amino-acid biosynthesis; L-asparagine biosynthesis; L-asparagine from L-aspartate (ammonia route): step 1/1. In Serratia proteamaculans (strain 568), this protein is Aspartate--ammonia ligase.